The chain runs to 75 residues: Defensin J1-1 (75 aa).

The signal sequence occupies residues 1 to 27 (MAGFSKVVATIFLMMLLVFATDMMAEA). Cystine bridges form between Cys-30–Cys-74, Cys-41–Cys-61, Cys-47–Cys-68, and Cys-51–Cys-70.

This sequence belongs to the DEFL family. In terms of assembly, monomer. Expressed in orange and red ripe fruit and to a lesser extent in mature, green fruit. Present in trace in young, green fruit.

It is found in the secreted. Plant defense peptide with antifungal activity against F.oxysporum and B.cinerea. This is Defensin J1-1 from Capsicum annuum (Capsicum pepper).